Consider the following 339-residue polypeptide: Phenylalanine--tRNA ligase alpha subunit (339 aa).

Residue Glu250 participates in Mg(2+) binding.

It belongs to the class-II aminoacyl-tRNA synthetase family. Phe-tRNA synthetase alpha subunit type 1 subfamily. In terms of assembly, tetramer of two alpha and two beta subunits. The cofactor is Mg(2+).

It is found in the cytoplasm. It carries out the reaction tRNA(Phe) + L-phenylalanine + ATP = L-phenylalanyl-tRNA(Phe) + AMP + diphosphate + H(+). The protein is Phenylalanine--tRNA ligase alpha subunit of Flavobacterium johnsoniae (strain ATCC 17061 / DSM 2064 / JCM 8514 / BCRC 14874 / CCUG 350202 / NBRC 14942 / NCIMB 11054 / UW101) (Cytophaga johnsonae).